We begin with the raw amino-acid sequence, 489 residues long: Cytochrome P450 71A26 (489 aa).

Residues 1-21 (MMIMFFLLCSIIFVVTIIIFR) traverse the membrane as a helical segment. Cys431 provides a ligand contact to heme.

This sequence belongs to the cytochrome P450 family. The cofactor is heme.

The protein resides in the membrane. The polypeptide is Cytochrome P450 71A26 (CYP71A26) (Arabidopsis thaliana (Mouse-ear cress)).